The chain runs to 34 residues: Ornithine carbamoyltransferase, catabolic (34 aa).

Belongs to the aspartate/ornithine carbamoyltransferase superfamily. OTCase family. Probably nonameric or dodecameric.

It localises to the cytoplasm. The catalysed reaction is carbamoyl phosphate + L-ornithine = L-citrulline + phosphate + H(+). The protein operates within amino-acid degradation; L-arginine degradation via ADI pathway; carbamoyl phosphate from L-arginine: step 2/2. This Pseudomonas putida (Arthrobacter siderocapsulatus) protein is Ornithine carbamoyltransferase, catabolic (arcB).